The following is a 320-amino-acid chain: tRNA U34 carboxymethyltransferase (320 aa).

Carboxy-S-adenosyl-L-methionine contacts are provided by residues lysine 89, tryptophan 103, lysine 108, glycine 128, 150-152 (DPT), 179-180 (IE), methionine 194, tyrosine 198, and arginine 313.

The protein belongs to the class I-like SAM-binding methyltransferase superfamily. CmoB family. In terms of assembly, homotetramer.

The catalysed reaction is carboxy-S-adenosyl-L-methionine + 5-hydroxyuridine(34) in tRNA = 5-carboxymethoxyuridine(34) in tRNA + S-adenosyl-L-homocysteine + H(+). Its function is as follows. Catalyzes carboxymethyl transfer from carboxy-S-adenosyl-L-methionine (Cx-SAM) to 5-hydroxyuridine (ho5U) to form 5-carboxymethoxyuridine (cmo5U) at position 34 in tRNAs. This is tRNA U34 carboxymethyltransferase from Glaesserella parasuis serovar 5 (strain SH0165) (Haemophilus parasuis).